Consider the following 135-residue polypeptide: MTELSKAEKVLKEFIIQMNQWELKYYPLFRNEGMTAYKDAAKKELDDIYDLFCTKKERKQGRQISLSCGEPPEYSPDEEVLSSELNKNKCVFITQQYTEAKNKFRYTLQFKEDEWRIDKKERFSFYDDKWIKYNL.

The interval Arg-58–Asp-77 is disordered.

Functionally, immunity component of a toxin-immunity protein module, which functions as a cellular contact-dependent growth inhibition (CDI) system. Specifically inhibits its cognate toxin RhsA. Cell contact is necessary for growth inhibition. This chain is Immunity protein RhsIA (rhsIA), found in Dickeya dadantii (strain 3937) (Erwinia chrysanthemi (strain 3937)).